The primary structure comprises 473 residues: Pyruvate kinase (473 aa).

Residue R32 coordinates substrate. Residues N34, S36, D66, and T67 each coordinate K(+). 34–37 (NFSH) contributes to the ATP binding site. ATP-binding residues include R73 and K155. Residue E221 coordinates Mg(2+). Substrate-binding residues include G244, D245, and T277. Mg(2+) is bound at residue D245.

The protein belongs to the pyruvate kinase family. Homotetramer. Requires Mg(2+) as cofactor. The cofactor is K(+).

The catalysed reaction is pyruvate + ATP = phosphoenolpyruvate + ADP + H(+). Its pathway is carbohydrate degradation; glycolysis; pyruvate from D-glyceraldehyde 3-phosphate: step 5/5. In Clostridium acetobutylicum (strain ATCC 824 / DSM 792 / JCM 1419 / IAM 19013 / LMG 5710 / NBRC 13948 / NRRL B-527 / VKM B-1787 / 2291 / W), this protein is Pyruvate kinase (pyk).